The following is a 317-amino-acid chain: Ribosomal protein L11 methyltransferase (317 aa).

Residues T158, G179, D201, and N244 each contribute to the S-adenosyl-L-methionine site.

This sequence belongs to the methyltransferase superfamily. PrmA family.

Its subcellular location is the cytoplasm. It carries out the reaction L-lysyl-[protein] + 3 S-adenosyl-L-methionine = N(6),N(6),N(6)-trimethyl-L-lysyl-[protein] + 3 S-adenosyl-L-homocysteine + 3 H(+). In terms of biological role, methylates ribosomal protein L11. The protein is Ribosomal protein L11 methyltransferase of Streptococcus pyogenes serotype M6 (strain ATCC BAA-946 / MGAS10394).